The sequence spans 102 residues: Small ribosomal subunit protein uS10 (102 aa).

Belongs to the universal ribosomal protein uS10 family. In terms of assembly, part of the 30S ribosomal subunit.

Involved in the binding of tRNA to the ribosomes. The protein is Small ribosomal subunit protein uS10 of Streptomyces griseus subsp. griseus (strain JCM 4626 / CBS 651.72 / NBRC 13350 / KCC S-0626 / ISP 5235).